The sequence spans 164 residues: Putative pre-16S rRNA nuclease (164 aa).

It belongs to the YqgF nuclease family.

It is found in the cytoplasm. Its function is as follows. Could be a nuclease involved in processing of the 5'-end of pre-16S rRNA. The chain is Putative pre-16S rRNA nuclease from Rhizobium johnstonii (strain DSM 114642 / LMG 32736 / 3841) (Rhizobium leguminosarum bv. viciae).